Here is a 375-residue protein sequence, read N- to C-terminus: Chaperone protein DnaJ (375 aa).

The J domain occupies 5-70 (DYYEVLGVNR…QKKGAYDRYG (66 aa)). A CR-type zinc finger spans residues 134 to 212 (GAEKTIRIPT…CGGAGRVKKQ (79 aa)). Residues Cys147, Cys150, Cys164, Cys167, Cys186, Cys189, Cys200, and Cys203 each coordinate Zn(2+). 4 CXXCXGXG motif repeats span residues 147–154 (CGTCHGSG), 164–171 (CPTCGGAG), 186–193 (CPKCHGTG), and 200–207 (CGDCGGAG).

Belongs to the DnaJ family. As to quaternary structure, homodimer. It depends on Zn(2+) as a cofactor.

It is found in the cytoplasm. Its function is as follows. Participates actively in the response to hyperosmotic and heat shock by preventing the aggregation of stress-denatured proteins and by disaggregating proteins, also in an autonomous, DnaK-independent fashion. Unfolded proteins bind initially to DnaJ; upon interaction with the DnaJ-bound protein, DnaK hydrolyzes its bound ATP, resulting in the formation of a stable complex. GrpE releases ADP from DnaK; ATP binding to DnaK triggers the release of the substrate protein, thus completing the reaction cycle. Several rounds of ATP-dependent interactions between DnaJ, DnaK and GrpE are required for fully efficient folding. Also involved, together with DnaK and GrpE, in the DNA replication of plasmids through activation of initiation proteins. This chain is Chaperone protein DnaJ, found in Azoarcus sp. (strain BH72).